A 150-amino-acid chain; its full sequence is Deoxyuridine 5'-triphosphate nucleotidohydrolase (150 aa).

Substrate contacts are provided by residues arginine 68–glycine 70, asparagine 81, threonine 85–aspartate 87, and lysine 95.

Belongs to the dUTPase family. Mg(2+) is required as a cofactor.

It carries out the reaction dUTP + H2O = dUMP + diphosphate + H(+). Its pathway is pyrimidine metabolism; dUMP biosynthesis; dUMP from dCTP (dUTP route): step 2/2. Its function is as follows. This enzyme is involved in nucleotide metabolism: it produces dUMP, the immediate precursor of thymidine nucleotides and it decreases the intracellular concentration of dUTP so that uracil cannot be incorporated into DNA. The polypeptide is Deoxyuridine 5'-triphosphate nucleotidohydrolase (Rickettsia bellii (strain OSU 85-389)).